The chain runs to 192 residues: MAQLFFKYGAMNSGKSIEILKVANNYEEQKKPVLIFTSGMDTRDEVGYVSSRVGLRRRAVPIFDDTNIFDYVESCRQKPYCVLIDEVQFLTKAHVLQLANIVDTLDIPVMGFGLKNDFRNELFEGSKYMLLYADKIEEMKTICWFCHKKAIMNLRVDEQGKPIYDGEQIQIGGNETYYPVCRKCHQHPPLTV.

Residues 9–16 (GAMNSGKS) and 85–88 (DEVQ) each bind ATP. Catalysis depends on E86, which acts as the Proton acceptor. Zn(2+) contacts are provided by C143, C146, C181, and C184.

This sequence belongs to the thymidine kinase family. As to quaternary structure, homotetramer.

It localises to the cytoplasm. The enzyme catalyses thymidine + ATP = dTMP + ADP + H(+). The chain is Thymidine kinase from Shouchella clausii (strain KSM-K16) (Alkalihalobacillus clausii).